A 98-amino-acid polypeptide reads, in one-letter code: NADH-ubiquinone oxidoreductase chain 4L (98 aa).

3 helical membrane passes run 1 to 21, 28 to 48, and 61 to 81; these read MASI…GVLI, STLL…TLLI, and LILL…LVTI.

Belongs to the complex I subunit 4L family. Core subunit of respiratory chain NADH dehydrogenase (Complex I) which is composed of 45 different subunits.

It localises to the mitochondrion inner membrane. The enzyme catalyses a ubiquinone + NADH + 5 H(+)(in) = a ubiquinol + NAD(+) + 4 H(+)(out). In terms of biological role, core subunit of the mitochondrial membrane respiratory chain NADH dehydrogenase (Complex I) which catalyzes electron transfer from NADH through the respiratory chain, using ubiquinone as an electron acceptor. Part of the enzyme membrane arm which is embedded in the lipid bilayer and involved in proton translocation. The chain is NADH-ubiquinone oxidoreductase chain 4L (MT-ND4L) from Thylamys elegans (Elegant fat-tailed mouse opossum).